The chain runs to 950 residues: Leucine--tRNA ligase (950 aa).

A 'HIGH' region motif is present at residues 42-52 (PYLNGNLHAGH). Residues 629–633 (KMSKS) carry the 'KMSKS' region motif. An ATP-binding site is contributed by K632. The tract at residues 928-950 (NPPYDPKGRAQNAEPGRPAIYIE) is disordered.

Belongs to the class-I aminoacyl-tRNA synthetase family.

The protein resides in the cytoplasm. The catalysed reaction is tRNA(Leu) + L-leucine + ATP = L-leucyl-tRNA(Leu) + AMP + diphosphate. The chain is Leucine--tRNA ligase from Methanothrix thermoacetophila (strain DSM 6194 / JCM 14653 / NBRC 101360 / PT) (Methanosaeta thermophila).